We begin with the raw amino-acid sequence, 770 residues long: MEKRAAAGPEGAPGARAPLAVVCLVNLFLTGRLSSAVPALAACSGKLEQHTERRGVIYSPAWPLNYPPGTNCSWYIQGDRGDMITISFRNFDVEESHQCSLDWLLLGPAAPPRQEAFRLCGSAIPPAFISARDHVWIFFHSDASSSGQAQGFRLSYIRGKLGQASCQTDEFRCDNGKCLPGPWQCNMVDECGDGSDEGNCSAPASEPPGSLCPGGTFPCSGARSTRCLPVERRCDGTQDCGDGSDEAGCPDLACGRRLGSFYGSFASPDLFGAARGPSDLHCTWLVDTQDPRRVLLQLELRLGYDDYVQVYEGLGERGDRLLQTLSYRSNHRPVSLEAAQGRLTVAYHARARSAGHGFNATYQVKGYCLPWEQPCGSSSEGDDGSTGEQGCFSEPQRCDGWWHCASGRDEQGCPACPPDQYPCEGGSGLCYAPADRCNNQKSCPDGADEKNCFSCQPGTFHCGTNLCIFETWRCDGQEDCQDGSDEHGCLAAVPRKVITAALIGSLVCGLLLVIALGCAFKLYSLRTQEYRAFETQMTRLEAEFVRREAPPSYGQLIAQGLIPPVEDFPVYSASQASVLQNLRTAMRRQMRRHASRRGPSRRRLGRLWNRLFHRPRAPRGQIPLLTAARTSQTVLGDGLLQAAPGPVPDPPVPNTDTGSPREAGDGPPSGSGHAPEVGPSVPPPPLNLRDPEYRPEDKERKACVDPLEDSPAPVDTPPEPCLAQDPHPQTPTASGIQDPHSAEPLGVCRSPPPTCSPILEASDDEALLVC.

A signal peptide spans 1–36 (MEKRAAAGPEGAPGARAPLAVVCLVNLFLTGRLSSA). At 37–496 (VPALAACSGK…HGCLAAVPRK (460 aa)) the chain is on the extracellular side. 9 disulfide bridges follow: Cys-43–Cys-72, Cys-99–Cys-120, Cys-166–Cys-178, Cys-173–Cys-191, Cys-185–Cys-200, Cys-212–Cys-227, Cys-219–Cys-240, Cys-234–Cys-249, and Cys-254–Cys-282. Positions 43 to 159 (CSGKLEQHTE…QGFRLSYIRG (117 aa)) constitute a CUB 1 domain. An N-linked (GlcNAc...) asparagine glycan is attached at Asn-71. LDL-receptor class A domains lie at 165–201 (SCQT…GNCS) and 211–250 (LCPG…AGCP). Asn-199 carries N-linked (GlcNAc...) asparagine glycosylation. Residues 254–365 (CGRRLGSFYG…HGFNATYQVK (112 aa)) enclose the CUB 2 domain. The N-linked (GlcNAc...) asparagine glycan is linked to Asn-359. LDL-receptor class A domains follow at residues 415 to 453 (ACPP…KNCF) and 454 to 490 (SCQP…HGCL). 6 disulfide bridges follow: Cys-416-Cys-430, Cys-423-Cys-443, Cys-437-Cys-452, Cys-455-Cys-467, Cys-462-Cys-480, and Cys-474-Cys-489. Residues 497–517 (VITAALIGSLVCGLLLVIALG) traverse the membrane as a helical segment. At 518–770 (CAFKLYSLRT…ASDDEALLVC (253 aa)) the chain is on the cytoplasmic side. The disordered stretch occupies residues 639–753 (LLQAAPGPVP…PLGVCRSPPP (115 aa)). A compositionally biased stretch (basic and acidic residues) spans 689–703 (RDPEYRPEDKERKAC).

It belongs to the LDLR family. As to quaternary structure, binds GGA1 and GGA2.

Its subcellular location is the membrane. The protein localises to the coated pit. Its function is as follows. Probable receptor, which may be involved in the internalization of lipophilic molecules and/or signal transduction. Its precise role is however unclear, since it does not bind to very low density lipoprotein (VLDL) or to LRPAP1 in vitro. In Rattus norvegicus (Rat), this protein is Low-density lipoprotein receptor-related protein 3 (Lrp3).